The sequence spans 130 residues: Small ribosomal subunit protein uS11 (130 aa).

This sequence belongs to the universal ribosomal protein uS11 family. Part of the 30S ribosomal subunit. Interacts with proteins S7 and S18. Binds to IF-3.

Its function is as follows. Located on the platform of the 30S subunit, it bridges several disparate RNA helices of the 16S rRNA. Forms part of the Shine-Dalgarno cleft in the 70S ribosome. The sequence is that of Small ribosomal subunit protein uS11 from Prochlorococcus marinus (strain NATL1A).